Consider the following 220-residue polypeptide: Small ribosomal subunit protein uS2 (220 aa).

It belongs to the universal ribosomal protein uS2 family.

The protein is Small ribosomal subunit protein uS2 of Methanococcus maripaludis (strain DSM 14266 / JCM 13030 / NBRC 101832 / S2 / LL).